The sequence spans 393 residues: Probable N-acetyl-LL-diaminopimelate aminotransferase (393 aa).

Lys231 bears the N6-(pyridoxal phosphate)lysine mark.

Belongs to the class-I pyridoxal-phosphate-dependent aminotransferase family. Homodimer. Requires pyridoxal 5'-phosphate as cofactor.

It is found in the cytoplasm. It catalyses the reaction N-acetyl-(2S,6S)-2,6-diaminopimelate + 2-oxoglutarate = L-2-acetamido-6-oxoheptanedioate + L-glutamate. The protein operates within amino-acid biosynthesis; L-lysine biosynthesis via DAP pathway; LL-2,6-diaminopimelate from (S)-tetrahydrodipicolinate (acetylase route): step 2/3. Essential for murein biosynthesis. Probably catalyzes the conversion of L-2-acetamido-6-oxopimelate to N-acetyl-LL-2,6-diaminopimelate. The polypeptide is Probable N-acetyl-LL-diaminopimelate aminotransferase (Bacillus subtilis (strain 168)).